The following is a 591-amino-acid chain: V-type ATP synthase alpha chain (591 aa).

232–239 (GPFGAGKT) contributes to the ATP binding site.

Belongs to the ATPase alpha/beta chains family.

It catalyses the reaction ATP + H2O + 4 H(+)(in) = ADP + phosphate + 5 H(+)(out). Produces ATP from ADP in the presence of a proton gradient across the membrane. The V-type alpha chain is a catalytic subunit. This Clostridium perfringens (strain ATCC 13124 / DSM 756 / JCM 1290 / NCIMB 6125 / NCTC 8237 / Type A) protein is V-type ATP synthase alpha chain.